We begin with the raw amino-acid sequence, 91 residues long: Small ribosomal subunit protein uS19 (91 aa).

Positions 72-91 are disordered; that stretch reads GEFSPTRKFGGHGDDKKKKK. Residues 82–91 are compositionally biased toward basic and acidic residues; it reads GHGDDKKKKK.

Belongs to the universal ribosomal protein uS19 family.

Protein S19 forms a complex with S13 that binds strongly to the 16S ribosomal RNA. This chain is Small ribosomal subunit protein uS19, found in Spiroplasma kunkelii.